Reading from the N-terminus, the 323-residue chain is tRNA-dihydrouridine synthase B (323 aa).

FMN contacts are provided by residues 16-18 (PMA) and Gln70. Cys100 (proton donor) is an active-site residue. Residues Lys139, 200 to 202 (NGD), and 224 to 225 (GR) each bind FMN.

This sequence belongs to the Dus family. DusB subfamily. It depends on FMN as a cofactor.

The enzyme catalyses a 5,6-dihydrouridine in tRNA + NAD(+) = a uridine in tRNA + NADH + H(+). The catalysed reaction is a 5,6-dihydrouridine in tRNA + NADP(+) = a uridine in tRNA + NADPH + H(+). Its function is as follows. Catalyzes the synthesis of 5,6-dihydrouridine (D), a modified base found in the D-loop of most tRNAs, via the reduction of the C5-C6 double bond in target uridines. The sequence is that of tRNA-dihydrouridine synthase B from Proteus vulgaris.